The sequence spans 158 residues: Protein Smg homolog (158 aa).

The protein belongs to the Smg family.

This Pseudoalteromonas atlantica (strain T6c / ATCC BAA-1087) protein is Protein Smg homolog.